The sequence spans 343 residues: UDP-3-O-acylglucosamine N-acyltransferase (343 aa).

Residue His245 is the Proton acceptor of the active site.

This sequence belongs to the transferase hexapeptide repeat family. LpxD subfamily. Homotrimer.

The catalysed reaction is a UDP-3-O-[(3R)-3-hydroxyacyl]-alpha-D-glucosamine + a (3R)-hydroxyacyl-[ACP] = a UDP-2-N,3-O-bis[(3R)-3-hydroxyacyl]-alpha-D-glucosamine + holo-[ACP] + H(+). It functions in the pathway bacterial outer membrane biogenesis; LPS lipid A biosynthesis. Functionally, catalyzes the N-acylation of UDP-3-O-acylglucosamine using 3-hydroxyacyl-ACP as the acyl donor. Is involved in the biosynthesis of lipid A, a phosphorylated glycolipid that anchors the lipopolysaccharide to the outer membrane of the cell. The sequence is that of UDP-3-O-acylglucosamine N-acyltransferase from Phenylobacterium zucineum (strain HLK1).